Here is a 568-residue protein sequence, read N- to C-terminus: Arginine--tRNA ligase (568 aa).

The 'HIGH' region signature appears at alanine 129–histidine 139.

This sequence belongs to the class-I aminoacyl-tRNA synthetase family. In terms of assembly, monomer.

It localises to the cytoplasm. The catalysed reaction is tRNA(Arg) + L-arginine + ATP = L-arginyl-tRNA(Arg) + AMP + diphosphate. The sequence is that of Arginine--tRNA ligase from Wolbachia pipientis wMel.